A 366-amino-acid chain; its full sequence is MRFVDEAVIKAISGNGGHGCVSFRREKFIPRGGPDGGDGGNGGNVVFKASTRLLSLYDFRLKRVYQAENGRPGQGSQMHGRGGKDLVVEMPVGTLVFERGENGAESLIADLSEPDVEVVIAHGGRGGKGNEHFKSSTMQAPRFSQPGEPGEEKSLRLELKILADAGLLGLPNAGKSTFISQVSAAKPKIAAYPFTTLVPNLGVMMDEFDPDRRMVIADIPGLIEGAHEGQGLGHRFLKHVERTRFLVHILSIEDVDMENPWAGFDLINDELQRFDETLGSREQIQVVNKIDLLPPEEVDGLRARAEADGRRIFFISALEGEGLDAVVSEMWRMLAELDRNVPLDSSRQIEPEPEEEFDVEVVWVRE.

The Obg domain occupies M1–L162. Positions R125–G150 are disordered. The OBG-type G domain occupies A163–A335. Residues G169–S176, F194–V198, D218–G221, N288–D291, and S316–L318 contribute to the GTP site. Mg(2+)-binding residues include S176 and T196.

It belongs to the TRAFAC class OBG-HflX-like GTPase superfamily. OBG GTPase family. In terms of assembly, monomer. Mg(2+) is required as a cofactor.

It is found in the cytoplasm. Functionally, an essential GTPase which binds GTP, GDP and possibly (p)ppGpp with moderate affinity, with high nucleotide exchange rates and a fairly low GTP hydrolysis rate. Plays a role in control of the cell cycle, stress response, ribosome biogenesis and in those bacteria that undergo differentiation, in morphogenesis control. The protein is GTPase Obg of Oleidesulfovibrio alaskensis (strain ATCC BAA-1058 / DSM 17464 / G20) (Desulfovibrio alaskensis).